The chain runs to 330 residues: Basic leucine zipper 2 (330 aa).

A disordered region spans residues 1–207 (MAQLPPKIPT…NRQSAQRSRV (207 aa)). Residues 21 to 34 (GHHHHAAHGHHHQR) are compositionally biased toward basic residues. The span at 45–56 (PLPPFPLPPPAP) shows a compositional bias: pro residues. Composition is skewed to low complexity over residues 57 to 72 (ANGGAQQQQQQQQHQP) and 139 to 151 (QPAAPAASASSPS). A compositionally biased stretch (basic and acidic residues) spans 155 to 166 (SMNDEKQDKGET). The bZIP domain maps to 188–244 (DPKRVKRILANRQSAQRSRVRKLQYISELERSVTSLQTEVSALSPRVAFLDHQRSLL). Residues 190–209 (KRVKRILANRQSAQRSRVRK) are basic motif. The segment at 216 to 244 (LERSVTSLQTEVSALSPRVAFLDHQRSLL) is leucine-zipper. The tract at residues 267-330 (GGTEEGDREA…LVIGRDPDAL (64 aa)) is disordered.

As to expression, expressed in roots, shoots and panicles.

The protein localises to the nucleus. Transcription regulator. This Oryza sativa subsp. japonica (Rice) protein is Basic leucine zipper 2 (BZIP02).